Consider the following 93-residue polypeptide: Pyrimidine/purine nucleoside phosphorylase (93 aa).

It belongs to the nucleoside phosphorylase PpnP family.

The enzyme catalyses a purine D-ribonucleoside + phosphate = a purine nucleobase + alpha-D-ribose 1-phosphate. The catalysed reaction is adenosine + phosphate = alpha-D-ribose 1-phosphate + adenine. It carries out the reaction cytidine + phosphate = cytosine + alpha-D-ribose 1-phosphate. It catalyses the reaction guanosine + phosphate = alpha-D-ribose 1-phosphate + guanine. The enzyme catalyses inosine + phosphate = alpha-D-ribose 1-phosphate + hypoxanthine. The catalysed reaction is thymidine + phosphate = 2-deoxy-alpha-D-ribose 1-phosphate + thymine. It carries out the reaction uridine + phosphate = alpha-D-ribose 1-phosphate + uracil. It catalyses the reaction xanthosine + phosphate = alpha-D-ribose 1-phosphate + xanthine. In terms of biological role, catalyzes the phosphorolysis of diverse nucleosides, yielding D-ribose 1-phosphate and the respective free bases. Can use uridine, adenosine, guanosine, cytidine, thymidine, inosine and xanthosine as substrates. Also catalyzes the reverse reactions. In Pseudomonas aeruginosa (strain LESB58), this protein is Pyrimidine/purine nucleoside phosphorylase.